Consider the following 223-residue polypeptide: Serum amyloid P-component (223 aa).

The signal sequence occupies residues 1–19 (MDKMLFWVSVFTIFLDVFA). The region spanning 24-223 (DKKVFVFPRE…YVIIKPRVWD (200 aa)) is the Pentraxin (PTX) domain. A disulfide bridge connects residues Cys-55 and Cys-114. 6 residues coordinate Ca(2+): Asp-77, Asn-78, Glu-155, Gln-156, Asp-157, and Gln-167. Asn-198 is a glycosylation site (N-linked (GlcNAc...) asparagine).

Belongs to the pentraxin family. Homopentamer. Pentraxin (or pentaxin) have a discoid arrangement of 5 non-covalently bound subunits. It depends on Ca(2+) as a cofactor.

The protein resides in the secreted. In Cavia porcellus (Guinea pig), this protein is Serum amyloid P-component (PTX2).